Here is a 332-residue protein sequence, read N- to C-terminus: Biotin synthase (332 aa).

Residues 53–282 form the Radical SAM core domain; that stretch reads YFGKKVKLNM…TKEIRISGGR (230 aa). The [4Fe-4S] cluster site is built by Cys71, Cys75, and Cys78. [2Fe-2S] cluster is bound by residues Cys115, Cys147, Cys207, and Arg277.

Belongs to the radical SAM superfamily. Biotin synthase family. In terms of assembly, homodimer. It depends on [4Fe-4S] cluster as a cofactor. [2Fe-2S] cluster serves as cofactor.

It catalyses the reaction (4R,5S)-dethiobiotin + (sulfur carrier)-SH + 2 reduced [2Fe-2S]-[ferredoxin] + 2 S-adenosyl-L-methionine = (sulfur carrier)-H + biotin + 2 5'-deoxyadenosine + 2 L-methionine + 2 oxidized [2Fe-2S]-[ferredoxin]. The protein operates within cofactor biosynthesis; biotin biosynthesis; biotin from 7,8-diaminononanoate: step 2/2. Catalyzes the conversion of dethiobiotin (DTB) to biotin by the insertion of a sulfur atom into dethiobiotin via a radical-based mechanism. The sequence is that of Biotin synthase from Bacillus anthracis.